We begin with the raw amino-acid sequence, 33 residues long: Glucagon-2 (33 aa).

Belongs to the glucagon family.

Its subcellular location is the secreted. Functionally, promotes hydrolysis of glycogen and lipids, and raises the blood sugar level. This Oreochromis niloticus (Nile tilapia) protein is Glucagon-2 (gcg2).